Reading from the N-terminus, the 445-residue chain is FAS-associated factor 2 (445 aa).

The region spanning 12-53 (EQTEKLLQFQDLTGIESMDQCRQTLQQHNWNIEAAVQDRLNE) is the UBA domain. Residues 275-353 (SERLEREERN…ERKSECLPAE (79 aa)) adopt a coiled-coil conformation. The span at 303–348 (ADQEKERKKKEKQEQKRREEEEAQLKQMLEERKKRNLEEEKERKSE) shows a compositional bias: basic and acidic residues. The disordered stretch occupies residues 303–354 (ADQEKERKKKEKQEQKRREEEEAQLKQMLEERKKRNLEEEKERKSECLPAEP). A UBX domain is found at 357 to 439 (DHPDNVKIIF…GLSQSQLLFV (83 aa)).

The protein localises to the cytoplasm. The protein resides in the lipid droplet. It localises to the endoplasmic reticulum. Its function is as follows. Plays an important role in endoplasmic reticulum-associated degradation (ERAD) that mediates ubiquitin-dependent degradation of misfolded endoplasmic reticulum proteins. Involved in inhibition of lipid droplet degradation. Involved in stress granule disassembly. The polypeptide is FAS-associated factor 2 (faf2) (Xenopus tropicalis (Western clawed frog)).